Consider the following 205-residue polypeptide: High frequency lysogenization protein HflD homolog (205 aa).

The protein belongs to the HflD family.

Its subcellular location is the cytoplasm. The protein localises to the cell inner membrane. This is High frequency lysogenization protein HflD homolog from Photobacterium profundum (strain SS9).